We begin with the raw amino-acid sequence, 481 residues long: Probable Xaa-Pro aminopeptidase PEPP (481 aa).

Mn(2+) contacts are provided by aspartate 265, aspartate 276, glutamate 399, and glutamate 439.

The protein belongs to the peptidase M24B family. Mn(2+) serves as cofactor.

The enzyme catalyses Release of any N-terminal amino acid, including proline, that is linked to proline, even from a dipeptide or tripeptide.. Catalyzes the removal of a penultimate prolyl residue from the N-termini of peptides. This is Probable Xaa-Pro aminopeptidase PEPP (PEPP) from Uncinocarpus reesii (strain UAMH 1704).